Consider the following 718-residue polypeptide: Kinesin-2a (718 aa).

In terms of domain architecture, Kinesin motor spans 5–335 (NIKVIVRCRP…LRYADRAKQI (331 aa)). 97–104 (GQTGAGKT) contacts ATP. 5 residues coordinate ADP: glycine 100, glycine 102, lysine 103, threonine 104, and tryptophan 105. Threonine 104 serves as a coordination point for Mg(2+). Residues 432–477 (SRKAADELEAKRRALAEAKQKRESELEQKEALNKEAIVTLTDLKSQ) are a coiled coil.

It belongs to the TRAFAC class myosin-kinesin ATPase superfamily. Kinesin family. Kinesin II subfamily. As to quaternary structure, monomer.

It localises to the cell projection. The protein localises to the cilium. Its subcellular location is the flagellum. The protein resides in the cytoplasm. It is found in the cytoskeleton. It localises to the flagellum axoneme. The protein localises to the flagellum basal body. Involved in anterograde intraflagellar transport (IFT). Involved in flagellar assembly. This chain is Kinesin-2a, found in Giardia intestinalis (strain ATCC 50803 / WB clone C6) (Giardia lamblia).